An 877-amino-acid polypeptide reads, in one-letter code: Phosphoenolpyruvate carboxylase (877 aa).

Catalysis depends on residues histidine 138 and lysine 543.

It belongs to the PEPCase type 1 family. Mg(2+) is required as a cofactor.

The enzyme catalyses oxaloacetate + phosphate = phosphoenolpyruvate + hydrogencarbonate. Forms oxaloacetate, a four-carbon dicarboxylic acid source for the tricarboxylic acid cycle. This chain is Phosphoenolpyruvate carboxylase, found in Aeromonas hydrophila subsp. hydrophila (strain ATCC 7966 / DSM 30187 / BCRC 13018 / CCUG 14551 / JCM 1027 / KCTC 2358 / NCIMB 9240 / NCTC 8049).